The following is a 183-amino-acid chain: UPF0340 protein LCA_1354 (183 aa).

The protein belongs to the UPF0340 family.

The protein is UPF0340 protein LCA_1354 of Latilactobacillus sakei subsp. sakei (strain 23K) (Lactobacillus sakei subsp. sakei).